We begin with the raw amino-acid sequence, 545 residues long: Glucose-6-phosphate isomerase (545 aa).

The active-site Proton donor is E351. Residues H382 and K510 contribute to the active site.

The protein belongs to the GPI family.

It localises to the cytoplasm. The enzyme catalyses alpha-D-glucose 6-phosphate = beta-D-fructose 6-phosphate. Its pathway is carbohydrate biosynthesis; gluconeogenesis. It functions in the pathway carbohydrate degradation; glycolysis; D-glyceraldehyde 3-phosphate and glycerone phosphate from D-glucose: step 2/4. In terms of biological role, catalyzes the reversible isomerization of glucose-6-phosphate to fructose-6-phosphate. This is Glucose-6-phosphate isomerase from Helicobacter pylori (strain Shi470).